The sequence spans 465 residues: Chromosomal replication initiator protein DnaA (465 aa).

The segment at 1 to 87 (MLWTDCLTRL…RPGSILSSSE (87 aa)) is domain I, interacts with DnaA modulators. The segment at 81–123 (SILSSSEQPATTTAALQTAPIPQPAKVKREPEPVANTAVSSKS) is disordered. The segment covering 88–100 (QPATTTAALQTAP) has biased composition (low complexity). Residues 88 to 127 (QPATTTAALQTAPIPQPAKVKREPEPVANTAVSSKSSKKK) form a domain II region. Positions 128–345 (LLNPQFTFSL…GALNKVVAIS (218 aa)) are domain III, AAA+ region. ATP contacts are provided by Gly173, Gly175, Lys176, and Thr177. The domain IV, binds dsDNA stretch occupies residues 346-465 (RFKGAPIDLD…YKNLLRLLQS (120 aa)).

It belongs to the DnaA family. As to quaternary structure, oligomerizes as a right-handed, spiral filament on DNA at oriC.

The protein resides in the cytoplasm. Its function is as follows. Plays an essential role in the initiation and regulation of chromosomal replication. ATP-DnaA binds to the origin of replication (oriC) to initiate formation of the DNA replication initiation complex once per cell cycle. Binds the DnaA box (a 9 base pair repeat at the origin) and separates the double-stranded (ds)DNA. Forms a right-handed helical filament on oriC DNA; dsDNA binds to the exterior of the filament while single-stranded (ss)DNA is stabiized in the filament's interior. The ATP-DnaA-oriC complex binds and stabilizes one strand of the AT-rich DNA unwinding element (DUE), permitting loading of DNA polymerase. After initiation quickly degrades to an ADP-DnaA complex that is not apt for DNA replication. Binds acidic phospholipids. In Acinetobacter baumannii (strain ATCC 17978 / DSM 105126 / CIP 53.77 / LMG 1025 / NCDC KC755 / 5377), this protein is Chromosomal replication initiator protein DnaA.